Consider the following 613-residue polypeptide: Myrcene synthase, chloroplastic (613 aa).

The N-terminal 46 residues, 1–46, are a transit peptide targeting the chloroplast; that stretch reads MQCMAVHQFAPLLSLLNCSRISSDFGRLFTPKTSTKSRSSTCHPIQ. (2E)-geranyl diphosphate contacts are provided by R324, D361, and D365. Mg(2+) is bound by residues D361 and D365. Positions 361 to 365 match the DDXXD motif motif; the sequence is DDIYD. A helical transmembrane segment spans residues 455–475; sequence IEMAWLSIGGPVILVHAYFCF. Residues R503 and D506 each coordinate (2E)-geranyl diphosphate. 3 residues coordinate Mg(2+): D506, T510, and E514.

Belongs to the terpene synthase family. Tpsb subfamily. Mg(2+) serves as cofactor. The cofactor is Mn(2+). In terms of tissue distribution, expressed in trichomes.

The protein localises to the plastid. It localises to the chloroplast membrane. The enzyme catalyses (2E)-geranyl diphosphate = beta-myrcene + diphosphate. It functions in the pathway secondary metabolite biosynthesis; terpenoid biosynthesis. Functionally, monoterpene synthase that catalyzes the formation of myrcene. Can use geranyl diphosphate as substrate, but not farnesyl diphosphate or geranylgeranyl diphosphate. The chain is Myrcene synthase, chloroplastic from Humulus lupulus (European hop).